Consider the following 618-residue polypeptide: 1-deoxy-D-xylulose-5-phosphate synthase (618 aa).

Residues His70 and 111–113 contribute to the thiamine diphosphate site; that span reads GHS. Asp142 contacts Mg(2+). Thiamine diphosphate-binding positions include 143 to 144, Asn171, Tyr278, and Glu360; that span reads GS. Residue Asn171 participates in Mg(2+) binding.

Belongs to the transketolase family. DXPS subfamily. Homodimer. It depends on Mg(2+) as a cofactor. The cofactor is thiamine diphosphate.

It catalyses the reaction D-glyceraldehyde 3-phosphate + pyruvate + H(+) = 1-deoxy-D-xylulose 5-phosphate + CO2. The protein operates within metabolic intermediate biosynthesis; 1-deoxy-D-xylulose 5-phosphate biosynthesis; 1-deoxy-D-xylulose 5-phosphate from D-glyceraldehyde 3-phosphate and pyruvate: step 1/1. Its function is as follows. Catalyzes the acyloin condensation reaction between C atoms 2 and 3 of pyruvate and glyceraldehyde 3-phosphate to yield 1-deoxy-D-xylulose-5-phosphate (DXP). The chain is 1-deoxy-D-xylulose-5-phosphate synthase from Helicobacter pylori (strain HPAG1).